Reading from the N-terminus, the 360-residue chain is Histidinol-phosphate aminotransferase (360 aa).

N6-(pyridoxal phosphate)lysine is present on lysine 222.

The protein belongs to the class-II pyridoxal-phosphate-dependent aminotransferase family. Histidinol-phosphate aminotransferase subfamily. As to quaternary structure, homodimer. Pyridoxal 5'-phosphate is required as a cofactor.

The enzyme catalyses L-histidinol phosphate + 2-oxoglutarate = 3-(imidazol-4-yl)-2-oxopropyl phosphate + L-glutamate. The protein operates within amino-acid biosynthesis; L-histidine biosynthesis; L-histidine from 5-phospho-alpha-D-ribose 1-diphosphate: step 7/9. This is Histidinol-phosphate aminotransferase from Listeria monocytogenes serotype 4b (strain F2365).